The primary structure comprises 787 residues: Disease resistance protein ADR1 (787 aa).

The RPW8 domain maps to 1–149 (MASFIDLFAG…LLTERNDSLS (149 aa)). Positions 96–112 (HANKMKDLEKQISRFLN) form a coiled coil. ATP is bound at residue 193–200 (GMSGSGKT). The region spanning 247–414 (HQRKLVILDD…PLDLLTSVWV (168 aa)) is the NB-ARC domain. LRR repeat units follow at residues 549-575 (MSRL…IFAN), 576-599 (LAKL…TIPL), 650-674 (ITSL…LSNV), and 722-745 (LGSL…VAAL).

The protein belongs to the disease resistance NB-LRR family.

Functionally, disease resistance (R) protein that mediates resistance against Hyaloperonospora parasitica in a salicylic acid-dependent manner. Also mediates resistance against Erysiphe cichoracearum is both salicylic acid-dependent and partially NPR1-dependent. Resistance proteins guard the plant against pathogens that contain an appropriate avirulence protein via an indirect interaction with this avirulence protein. That triggers a defense system including the hypersensitive response, which restricts the pathogen growth. The polypeptide is Disease resistance protein ADR1 (ADR1) (Arabidopsis thaliana (Mouse-ear cress)).